We begin with the raw amino-acid sequence, 187 residues long: 1,6-anhydro-N-acetylmuramyl-L-alanine amidase AmpD (187 aa).

Residues 29 to 167 form the N-acetylmuramoyl-L-alanine amidase domain; that stretch reads SLLVVHNISL…TPDRKTDPGP (139 aa). His-34 contacts Zn(2+). Glu-116 acts as the Proton acceptor in catalysis. The Zn(2+) site is built by His-154 and Asp-164.

This sequence belongs to the N-acetylmuramoyl-L-alanine amidase 2 family. Zn(2+) serves as cofactor.

It localises to the cytoplasm. The enzyme catalyses Hydrolyzes the link between N-acetylmuramoyl residues and L-amino acid residues in certain cell-wall glycopeptides.. In terms of biological role, involved in cell wall peptidoglycan recycling. Specifically cleaves the amide bond between the lactyl group of N-acetylmuramic acid and the alpha-amino group of the L-alanine in degradation products containing an anhydro N-acetylmuramyl moiety. This is 1,6-anhydro-N-acetylmuramyl-L-alanine amidase AmpD (ampD) from Salmonella typhimurium (strain LT2 / SGSC1412 / ATCC 700720).